A 183-amino-acid chain; its full sequence is Ubiquitin carboxyl-terminal hydrolase 17-like protein 23 (183 aa).

Positions 80–183 (AGLQNMGNTC…KACLPGHKQV (104 aa)) constitute a USP domain.

The protein belongs to the peptidase C19 family. USP17 subfamily.

The protein localises to the nucleus. It localises to the endoplasmic reticulum. In Homo sapiens (Human), this protein is Ubiquitin carboxyl-terminal hydrolase 17-like protein 23 (USP17L23).